We begin with the raw amino-acid sequence, 323 residues long: Sphingolipid delta(4)-desaturase DES1 (323 aa).

G2 is lipidated: N-myristoyl glycine. 2 consecutive transmembrane segments (helical) span residues 41–61 (HNLI…FYLV) and 68–88 (WVIF…TLAI). Positions 89–93 (HEISH) match the Histidine box-1 motif. Residues 104 to 124 (WNRWFGMFANLSLGVPYSISF) form a helical membrane-spanning segment. Positions 128–132 (HMDHH) match the Histidine box-2 motif. 3 consecutive transmembrane segments (helical) span residues 152 to 172 (FFCT…FYAF), 184 to 204 (YLEI…YYVF), and 209 to 229 (LVYM…SGHF). The short motif at 259–263 (HNEHH) is the Histidine box-3 element. S307 carries the post-translational modification Phosphoserine.

This sequence belongs to the fatty acid desaturase type 1 family. DEGS subfamily. Interacts with RLBP1; the interaction increases synthesis of chromophore-precursors by DEGS1. In terms of processing, myristoylation can target the enzyme to the mitochondria leading to an increase in ceramide levels. Detected in testis. Detected in pachytene spermatocytes and round spermatids. Expressed in retina and retinal pigment epithelium by Mueller cells (at protein level).

It is found in the mitochondrion membrane. The protein localises to the endoplasmic reticulum membrane. The catalysed reaction is an N-acylsphinganine + 2 Fe(II)-[cytochrome b5] + O2 + 2 H(+) = an N-acylsphing-4-enine + 2 Fe(III)-[cytochrome b5] + 2 H2O. It catalyses the reaction all-trans-retinol = 11-cis-retinol. It carries out the reaction all-trans-retinol = 9-cis-retinol. The enzyme catalyses all-trans-retinol = 13-cis-retinol. The catalysed reaction is 11-cis-retinol = 13-cis-retinol. It catalyses the reaction 11-cis-retinol = 9-cis-retinol. In terms of biological role, has sphingolipid-delta-4-desaturase activity. Converts D-erythro-sphinganine to D-erythro-sphingosine (E-sphing-4-enine). Catalyzes the equilibrium isomerization of retinols. The chain is Sphingolipid delta(4)-desaturase DES1 from Mus musculus (Mouse).